The sequence spans 186 residues: Lipoprotein signal peptidase (186 aa).

4 consecutive transmembrane segments (helical) span residues 8 to 28 (FFSV…FLDL), 44 to 64 (IPVL…FVFG), 66 to 86 (FQDN…FLIF), and 97 to 117 (AWGW…KFFV). Active-site residues include Asp-142 and Asp-164. A helical transmembrane segment spans residues 157 to 177 (WPAFNVADSCVSIGIVILLFT).

It belongs to the peptidase A8 family.

It localises to the cell inner membrane. The catalysed reaction is Release of signal peptides from bacterial membrane prolipoproteins. Hydrolyzes -Xaa-Yaa-Zaa-|-(S,diacylglyceryl)Cys-, in which Xaa is hydrophobic (preferably Leu), and Yaa (Ala or Ser) and Zaa (Gly or Ala) have small, neutral side chains.. The protein operates within protein modification; lipoprotein biosynthesis (signal peptide cleavage). Functionally, this protein specifically catalyzes the removal of signal peptides from prolipoproteins. The chain is Lipoprotein signal peptidase from Leptospira biflexa serovar Patoc (strain Patoc 1 / ATCC 23582 / Paris).